A 589-amino-acid chain; its full sequence is Probable cytochrome P450 49a1 (589 aa).

The tract at residues 56–90 (TGESSNPKKLNVSQQPVTSVATTRTTASSLPAETT) is disordered. Positions 57-71 (GESSNPKKLNVSQQP) are enriched in polar residues. The span at 72 to 84 (VTSVATTRTTASS) shows a compositional bias: low complexity. C536 is a binding site for heme.

This sequence belongs to the cytochrome P450 family. Heme is required as a cofactor.

Its subcellular location is the endoplasmic reticulum membrane. It localises to the microsome membrane. Its function is as follows. May be involved in the metabolism of insect hormones and in the breakdown of synthetic insecticides. The chain is Probable cytochrome P450 49a1 (Cyp49a1) from Drosophila melanogaster (Fruit fly).